The chain runs to 273 residues: Large ribosomal subunit protein uL2 (273 aa).

Residues 222-273 (GMAMNPVDHPHGGGEGRNKGIQPVSPWGTPAKGYRTRSNKRTDKYIVRRRNK) are disordered. A compositionally biased stretch (basic and acidic residues) spans 229–239 (DHPHGGGEGRN).

This sequence belongs to the universal ribosomal protein uL2 family. As to quaternary structure, part of the 50S ribosomal subunit. Forms a bridge to the 30S subunit in the 70S ribosome.

One of the primary rRNA binding proteins. Required for association of the 30S and 50S subunits to form the 70S ribosome, for tRNA binding and peptide bond formation. It has been suggested to have peptidyltransferase activity; this is somewhat controversial. Makes several contacts with the 16S rRNA in the 70S ribosome. The protein is Large ribosomal subunit protein uL2 of Tolumonas auensis (strain DSM 9187 / NBRC 110442 / TA 4).